We begin with the raw amino-acid sequence, 190 residues long: Adenylate kinase (190 aa).

12–17 (GSGKTT) is an ATP binding site. Positions 34 to 63 (STGELLRAEVASGSERGKIIEGFTSKGNLV) are NMP. Residues threonine 35, arginine 40, 61-63 (NLV), 88-91 (GYPR), and glutamine 95 contribute to the AMP site. The interval 130 to 136 (GRARGAD) is LID. Arginine 131 serves as a coordination point for ATP. Positions 133 and 145 each coordinate AMP. Arginine 173 lines the ATP pocket.

The protein belongs to the adenylate kinase family. In terms of assembly, monomer.

It localises to the cytoplasm. It catalyses the reaction AMP + ATP = 2 ADP. It functions in the pathway purine metabolism; AMP biosynthesis via salvage pathway; AMP from ADP: step 1/1. Functionally, catalyzes the reversible transfer of the terminal phosphate group between ATP and AMP. Plays an important role in cellular energy homeostasis and in adenine nucleotide metabolism. This is Adenylate kinase from Wolinella succinogenes (strain ATCC 29543 / DSM 1740 / CCUG 13145 / JCM 31913 / LMG 7466 / NCTC 11488 / FDC 602W) (Vibrio succinogenes).